Here is a 364-residue protein sequence, read N- to C-terminus: UDP-N-acetylglucosamine--N-acetylmuramyl-(pentapeptide) pyrophosphoryl-undecaprenol N-acetylglucosamine transferase (364 aa).

UDP-N-acetyl-alpha-D-glucosamine-binding positions include T10 to G12, N124, R161, S195, and Q291.

This sequence belongs to the glycosyltransferase 28 family. MurG subfamily.

It is found in the cell membrane. It catalyses the reaction di-trans,octa-cis-undecaprenyl diphospho-N-acetyl-alpha-D-muramoyl-L-alanyl-D-glutamyl-meso-2,6-diaminopimeloyl-D-alanyl-D-alanine + UDP-N-acetyl-alpha-D-glucosamine = di-trans,octa-cis-undecaprenyl diphospho-[N-acetyl-alpha-D-glucosaminyl-(1-&gt;4)]-N-acetyl-alpha-D-muramoyl-L-alanyl-D-glutamyl-meso-2,6-diaminopimeloyl-D-alanyl-D-alanine + UDP + H(+). Its pathway is cell wall biogenesis; peptidoglycan biosynthesis. Its function is as follows. Cell wall formation. Catalyzes the transfer of a GlcNAc subunit on undecaprenyl-pyrophosphoryl-MurNAc-pentapeptide (lipid intermediate I) to form undecaprenyl-pyrophosphoryl-MurNAc-(pentapeptide)GlcNAc (lipid intermediate II). This is UDP-N-acetylglucosamine--N-acetylmuramyl-(pentapeptide) pyrophosphoryl-undecaprenol N-acetylglucosamine transferase from Streptomyces coelicolor (strain ATCC BAA-471 / A3(2) / M145).